A 153-amino-acid chain; its full sequence is Large ribosomal subunit protein bL9 (153 aa).

This sequence belongs to the bacterial ribosomal protein bL9 family.

Its function is as follows. Binds to the 23S rRNA. The protein is Large ribosomal subunit protein bL9 of Gloeobacter violaceus (strain ATCC 29082 / PCC 7421).